The chain runs to 209 residues: Nucleoside triphosphate pyrophosphatase (209 aa).

Catalysis depends on aspartate 74, which acts as the Proton acceptor.

The protein belongs to the Maf family. Requires a divalent metal cation as cofactor.

The protein resides in the cytoplasm. It carries out the reaction a ribonucleoside 5'-triphosphate + H2O = a ribonucleoside 5'-phosphate + diphosphate + H(+). The catalysed reaction is a 2'-deoxyribonucleoside 5'-triphosphate + H2O = a 2'-deoxyribonucleoside 5'-phosphate + diphosphate + H(+). In terms of biological role, nucleoside triphosphate pyrophosphatase. May have a dual role in cell division arrest and in preventing the incorporation of modified nucleotides into cellular nucleic acids. This Neorickettsia sennetsu (strain ATCC VR-367 / Miyayama) (Ehrlichia sennetsu) protein is Nucleoside triphosphate pyrophosphatase.